The following is an 88-amino-acid chain: Cell division topological specificity factor (88 aa).

Belongs to the MinE family.

Prevents the cell division inhibition by proteins MinC and MinD at internal division sites while permitting inhibition at polar sites. This ensures cell division at the proper site by restricting the formation of a division septum at the midpoint of the long axis of the cell. This is Cell division topological specificity factor from Citrobacter koseri (strain ATCC BAA-895 / CDC 4225-83 / SGSC4696).